The chain runs to 530 residues: T-complex protein 1 subunit zeta (530 aa).

Position 38 (Gly38) interacts with ADP. ATP is bound at residue Gly38. Asp89 serves as a coordination point for Mg(2+). 7 residues coordinate ADP: Gly90, Thr91, Thr92, Ser93, Thr157, Lys158, and Ala410. ATP-binding residues include Gly90, Thr91, and Thr92. The ATP site is built by Ala410, Gly411, Asp495, and Lys500. ADP is bound at residue Asp495.

Component of the chaperonin-containing T-complex (TRiC), a hexadecamer composed of two identical back-to-back stacked rings enclosing a protein folding chamber. Each ring is made up of eight different subunits: TCP1/CCT1, CCT2, CCT3, CCT4, CCT5, CCT6A/CCT6, CCT7, CCT8. Interacts with PACRG.

The protein localises to the cytoplasm. The enzyme catalyses ATP + H2O = ADP + phosphate + H(+). In terms of biological role, component of the chaperonin-containing T-complex (TRiC), a molecular chaperone complex that assists the folding of actin, tubulin and other proteins upon ATP hydrolysis. In Gallus gallus (Chicken), this protein is T-complex protein 1 subunit zeta.